We begin with the raw amino-acid sequence, 94 residues long: Protein FAM24B (94 aa).

Residues 1–21 (MPVIAGGILAALLLLIVVVLC) form the signal peptide.

The protein belongs to the FAM24 family.

It localises to the secreted. In Homo sapiens (Human), this protein is Protein FAM24B (FAM24B).